Reading from the N-terminus, the 114-residue chain is Small ribosomal subunit protein bS16 (114 aa).

It belongs to the bacterial ribosomal protein bS16 family.

The polypeptide is Small ribosomal subunit protein bS16 (Prochlorococcus marinus subsp. pastoris (strain CCMP1986 / NIES-2087 / MED4)).